We begin with the raw amino-acid sequence, 811 residues long: Ribonucleoside-diphosphate reductase large subunit (811 aa).

Substrate-binding positions include T231, 246 to 247 (SC), G277, 450 to 454 (NLCTE), and 636 to 640 (PTASS). A disulfide bridge links C247 with C467. N450 functions as the Proton acceptor in the catalytic mechanism. Residue C452 is the Cysteine radical intermediate of the active site. E454 (proton acceptor) is an active-site residue.

It belongs to the ribonucleoside diphosphate reductase large chain family. Heterotetramer composed of a homodimer of the large subunit (R1) and a homodimer of the small subunit (R2). Larger multisubunit protein complex are also active, composed of (R1)n(R2)n.

It catalyses the reaction a 2'-deoxyribonucleoside 5'-diphosphate + [thioredoxin]-disulfide + H2O = a ribonucleoside 5'-diphosphate + [thioredoxin]-dithiol. In terms of biological role, ribonucleoside-diphosphate reductase holoenzyme provides the precursors necessary for viral DNA synthesis. Allows virus growth in non-dividing cells, as well as reactivation from latency in infected hosts. Catalyzes the biosynthesis of deoxyribonucleotides from the corresponding ribonucleotides. In Amazona oratrix (yellow-headed parrot), this protein is Ribonucleoside-diphosphate reductase large subunit.